We begin with the raw amino-acid sequence, 183 residues long: Ion-translocating oxidoreductase complex subunit B (183 aa).

The interval 1 to 23 is hydrophobic; sequence MLSALLVMAAIAVVLGAALGFAA. The 4Fe-4S domain maps to 29–88; sequence EGDPLVDKIDAILPQTQCGQCGYPGCKPYAQAIAQGEADINQCPPGGEEGVRKLADLLGR. [4Fe-4S] cluster-binding residues include cysteine 46, cysteine 49, cysteine 54, cysteine 71, cysteine 113, cysteine 116, cysteine 119, cysteine 123, cysteine 143, cysteine 146, cysteine 149, and cysteine 153. 4Fe-4S ferredoxin-type domains lie at 104–133 and 135–163; these read AVAYIDENVCIGCTLCLQACPVDAIVGAAK and MHTVVDPLCTGCELCVAPCPVDCIYMEPV.

The protein belongs to the 4Fe4S bacterial-type ferredoxin family. RnfB subfamily. The complex is composed of six subunits: RnfA, RnfB, RnfC, RnfD, RnfE and RnfG. Requires [4Fe-4S] cluster as cofactor.

The protein localises to the cell inner membrane. Part of a membrane-bound complex that couples electron transfer with translocation of ions across the membrane. This is Ion-translocating oxidoreductase complex subunit B from Azoarcus sp. (strain BH72).